The sequence spans 286 residues: Polygalacturonan/rhamnogalacturonan transport system permease protein YtcP (286 aa).

6 helical membrane-spanning segments follow: residues 9-29 (LIYG…IHVI), 69-89 (LLVS…LSSL), 106-126 (MFLV…FLVV), 131-151 (LLDS…NLII), 176-196 (GIFF…ISLF), and 251-271 (TIKM…YPFI). One can recognise an ABC transmembrane type-1 domain in the interval 69–271 (LLVSVFVTVI…IPVLLVYPFI (203 aa)).

The protein belongs to the binding-protein-dependent transport system permease family. CysTW subfamily. As to quaternary structure, the complex is probably composed of two ATP-binding proteins (MsmX), two transmembrane proteins (YtcP and YteP) and a solute-binding protein (YtcQ).

Its subcellular location is the cell membrane. Involved in pectin degradation. Part of the ABC transporter complex YtcQP-YteP involved in the uptake of polygalacturonan and rhamnogalacturonan type I. Responsible for the translocation of the substrate across the membrane. This Bacillus subtilis (strain 168) protein is Polygalacturonan/rhamnogalacturonan transport system permease protein YtcP (ytcP).